The chain runs to 990 residues: Nucleotide-binding leucine-rich repeat (NLR)-like protein (990 aa).

The interval 22–304 is purine nucleoside phosphorylase domain; that stretch reads GWICAIPTEL…AVAAAYAKIL (283 aa). The region spanning 334-563 is the NB-ARC domain; it reads REEHLRQVLT…TISNYLEVYE (230 aa). TPR repeat units follow at residues 732–765, 774–807, 816–849, 858–891, 900–933, and 942–975; these read RDLL…KKLA, IGSM…MKQV, LGSM…RKQA, LMSM…KQQT, LASM…RKQV, and LQSM…ATLD. A disordered region spans residues 965–990; sequence QQQQQSQATLDEGRLSKPARKRRKKK. Positions 981 to 990 are enriched in basic residues; that stretch reads KPARKRRKKK.

It catalyses the reaction ATP + H2O = D-ribose 5-triphosphate + adenine. It carries out the reaction dATP + H2O = 2-deoxyribose 5-triphosphate + adenine. The N-terminal purine nucleoside phosphorylase (PNP) domain cleaves the N-glycosidic bond of ATP, and to a lesser extent dATP; has very weak activity on adenosine and deoxyadenosine and no activity on (d)ADP or (d)AMP. The chain is Nucleotide-binding leucine-rich repeat (NLR)-like protein from Hyaloscypha variabilis (strain UAMH 11265 / GT02V1 / F) (Meliniomyces variabilis).